The primary structure comprises 345 residues: Probable deoxyhypusine synthase 2 (345 aa).

Lysine 292 functions as the Nucleophile in the catalytic mechanism.

Belongs to the deoxyhypusine synthase family. NAD(+) serves as cofactor.

The enzyme catalyses [eIF5A protein]-L-lysine + spermidine = [eIF5A protein]-deoxyhypusine + propane-1,3-diamine. It participates in protein modification; eIF5A hypusination. Functionally, catalyzes the NAD-dependent oxidative cleavage of spermidine and the subsequent transfer of the butylamine moiety of spermidine to the epsilon-amino group of a specific lysine residue of the eIF-5A precursor protein to form the intermediate deoxyhypusine residue. This chain is Probable deoxyhypusine synthase 2 (dys2), found in Methanosarcina mazei (strain ATCC BAA-159 / DSM 3647 / Goe1 / Go1 / JCM 11833 / OCM 88) (Methanosarcina frisia).